We begin with the raw amino-acid sequence, 168 residues long: Lipoprotein signal peptidase (168 aa).

4 helical membrane passes run 15 to 35 (WLWL…IVME), 47 to 67 (VLPF…SFLS), 75 to 95 (WLFT…MSKL), and 107 to 127 (AMII…GFVV). Residues D128 and D146 contribute to the active site. A helical membrane pass occupies residues 141 to 161 (AFNLADTAICLGAAMIILDGF).

The protein belongs to the peptidase A8 family.

It is found in the cell inner membrane. The enzyme catalyses Release of signal peptides from bacterial membrane prolipoproteins. Hydrolyzes -Xaa-Yaa-Zaa-|-(S,diacylglyceryl)Cys-, in which Xaa is hydrophobic (preferably Leu), and Yaa (Ala or Ser) and Zaa (Gly or Ala) have small, neutral side chains.. It functions in the pathway protein modification; lipoprotein biosynthesis (signal peptide cleavage). This protein specifically catalyzes the removal of signal peptides from prolipoproteins. The protein is Lipoprotein signal peptidase of Vibrio vulnificus (strain CMCP6).